The chain runs to 602 residues: Carbon catabolite repressor protein 4 homolog 1 (602 aa).

The segment at Ala-113 to Gly-136 is disordered. A Mg(2+)-binding site is contributed by Glu-299.

It belongs to the CCR4/nocturin family. Component of the CCR4-NOT complex, at least composed of CRR4 and CAF1 proteins. Mg(2+) is required as a cofactor.

Its subcellular location is the nucleus. It localises to the cytoplasm. The catalysed reaction is Exonucleolytic cleavage of poly(A) to 5'-AMP.. Functionally, acts as a catalytic component of the CCR4-NOT core complex, which in the nucleus seems to be a general transcription factor, and in the cytoplasm the major mRNA deadenylase involved in mRNA turnover. The protein is Carbon catabolite repressor protein 4 homolog 1 (CCR4-1) of Arabidopsis thaliana (Mouse-ear cress).